Consider the following 463-residue polypeptide: Mitochondrial dynamics protein MID51 (463 aa).

Topologically, residues 1–23 (MAGAGERKGKKDDNGIGTAIDFV) are mitochondrial intermembrane. The chain crosses the membrane as a helical span at residues 24-46 (LSNARLVLGVGGAAMLGIATLAV). Residues 47 to 463 (KRMYDRAISA…LSEPEVLLQT (417 aa)) are Cytoplasmic-facing. The dimerization stretch occupies residues 49 to 195 (MYDRAISAPT…LSGSLYDDLQ (147 aa)). 4 positions are modified to phosphoserine: serine 55, serine 59, serine 79, and serine 94. Residues 57 to 79 (PTSPTRLSHSGKRSWEEPNWMGS) form a disordered region. Residues 104-123 (AFDTDTFCPPRPKPVARKGQ) form a disordered region. Positions 160–169 (AAVDICAELR) are important for interaction with DNM1L. The ADP site is built by serine 187, serine 189, and histidine 201. The important for interaction with DNM1L stretch occupies residues 234–243 (RRENPEYFPR). ADP contacts are provided by serine 340, arginine 342, and lysine 368.

The protein belongs to the MID49/MID51 family. Homodimer. Interacts with DNM1L.

The protein resides in the mitochondrion outer membrane. In terms of biological role, mitochondrial outer membrane protein which regulates mitochondrial fission/fusion dynamics. Promotes the recruitment and association of the fission mediator dynamin-related protein 1 (DNM1L) to the mitochondrial surface independently of the mitochondrial fission FIS1 and MFF proteins. Regulates DNM1L GTPase activity and DNM1L oligomerization. Binds ADP and can also bind GDP, although with lower affinity. Does not bind CDP, UDP, ATP, AMP or GTP. Inhibits DNM1L GTPase activity in the absence of bound ADP. Requires ADP to stimulate DNM1L GTPase activity and the assembly of DNM1L into long, oligomeric tubules with a spiral pattern, as opposed to the ring-like DNM1L oligomers observed in the absence of bound ADP. Does not require ADP for its function in recruiting DNM1L. The protein is Mitochondrial dynamics protein MID51 (MIEF1) of Pongo abelii (Sumatran orangutan).